A 220-amino-acid polypeptide reads, in one-letter code: 2-dehydro-3-deoxy-phosphogluconate aldolase (220 aa).

Glu48 acts as the Proton acceptor in catalysis. Positions 52, 76, and 136 each coordinate pyruvate. Catalysis depends on Lys136, which acts as the Schiff-base intermediate with substrate.

This sequence belongs to the KHG/KDPG aldolase family. In terms of assembly, homotrimer.

The enzyme catalyses 2-dehydro-3-deoxy-6-phospho-D-gluconate = D-glyceraldehyde 3-phosphate + pyruvate. Its pathway is carbohydrate acid metabolism; 2-dehydro-3-deoxy-D-gluconate degradation; D-glyceraldehyde 3-phosphate and pyruvate from 2-dehydro-3-deoxy-D-gluconate: step 2/2. In terms of biological role, involved in the degradation of glucose via the Entner-Doudoroff pathway. Catalyzes the reversible, stereospecific retro-aldol cleavage of 2-keto-3-deoxy-6-phosphogluconate (KDPG) to pyruvate and D-glyceraldehyde-3-phosphate. In Pseudomonas aeruginosa (strain ATCC 15692 / DSM 22644 / CIP 104116 / JCM 14847 / LMG 12228 / 1C / PRS 101 / PAO1), this protein is 2-dehydro-3-deoxy-phosphogluconate aldolase (eda).